We begin with the raw amino-acid sequence, 448 residues long: Probable glycine dehydrogenase (decarboxylating) subunit 1 (448 aa).

This sequence belongs to the GcvP family. N-terminal subunit subfamily. The glycine cleavage system is composed of four proteins: P, T, L and H. In this organism, the P 'protein' is a heterodimer of two subunits.

The catalysed reaction is N(6)-[(R)-lipoyl]-L-lysyl-[glycine-cleavage complex H protein] + glycine + H(+) = N(6)-[(R)-S(8)-aminomethyldihydrolipoyl]-L-lysyl-[glycine-cleavage complex H protein] + CO2. Functionally, the glycine cleavage system catalyzes the degradation of glycine. The P protein binds the alpha-amino group of glycine through its pyridoxal phosphate cofactor; CO(2) is released and the remaining methylamine moiety is then transferred to the lipoamide cofactor of the H protein. This Listeria monocytogenes serotype 4b (strain CLIP80459) protein is Probable glycine dehydrogenase (decarboxylating) subunit 1.